The primary structure comprises 251 residues: Phosphoribosylaminoimidazole-succinocarboxamide synthase (251 aa).

It belongs to the SAICAR synthetase family.

It carries out the reaction 5-amino-1-(5-phospho-D-ribosyl)imidazole-4-carboxylate + L-aspartate + ATP = (2S)-2-[5-amino-1-(5-phospho-beta-D-ribosyl)imidazole-4-carboxamido]succinate + ADP + phosphate + 2 H(+). It functions in the pathway purine metabolism; IMP biosynthesis via de novo pathway; 5-amino-1-(5-phospho-D-ribosyl)imidazole-4-carboxamide from 5-amino-1-(5-phospho-D-ribosyl)imidazole-4-carboxylate: step 1/2. The protein is Phosphoribosylaminoimidazole-succinocarboxamide synthase of Phenylobacterium zucineum (strain HLK1).